A 63-amino-acid chain; its full sequence is Conotoxin Cal12.5 (63 aa).

Positions 1–21 are cleaved as a signal peptide; it reads MKVTCVLVVLLLLLPYGDLLG.

The protein belongs to the conotoxin O1 superfamily. In terms of processing, contains 4 disulfide bonds. Expressed by the venom duct.

The protein localises to the secreted. Its function is as follows. Probable neurotoxin. The chain is Conotoxin Cal12.5 from Californiconus californicus (California cone).